We begin with the raw amino-acid sequence, 90 residues long: Probable Fe(2+)-trafficking protein (90 aa).

Belongs to the Fe(2+)-trafficking protein family.

Could be a mediator in iron transactions between iron acquisition and iron-requiring processes, such as synthesis and/or repair of Fe-S clusters in biosynthetic enzymes. The polypeptide is Probable Fe(2+)-trafficking protein (Pseudoalteromonas translucida (strain TAC 125)).